Consider the following 167-residue polypeptide: Ribosome maturation factor RimM (167 aa).

Residues 92–166 (DDEFYHADLI…RIVADPPEEQ (75 aa)) form the PRC barrel domain.

This sequence belongs to the RimM family. As to quaternary structure, binds ribosomal protein uS19.

The protein resides in the cytoplasm. Its function is as follows. An accessory protein needed during the final step in the assembly of 30S ribosomal subunit, possibly for assembly of the head region. Essential for efficient processing of 16S rRNA. May be needed both before and after RbfA during the maturation of 16S rRNA. It has affinity for free ribosomal 30S subunits but not for 70S ribosomes. The protein is Ribosome maturation factor RimM of Paracoccus denitrificans (strain Pd 1222).